Consider the following 478-residue polypeptide: Cysteine--tRNA ligase (478 aa).

Residue Cys37 coordinates Zn(2+). The 'HIGH' region motif lies at 39-49; the sequence is PTVYHYAHIGN. Cys224, His249, and Glu253 together coordinate Zn(2+). Positions 281 to 285 match the 'KMSKS' region motif; that stretch reads KMSKS. Lys284 is an ATP binding site.

This sequence belongs to the class-I aminoacyl-tRNA synthetase family. Monomer. Zn(2+) is required as a cofactor.

It localises to the cytoplasm. It carries out the reaction tRNA(Cys) + L-cysteine + ATP = L-cysteinyl-tRNA(Cys) + AMP + diphosphate. The chain is Cysteine--tRNA ligase from Protochlamydia amoebophila (strain UWE25).